The primary structure comprises 168 residues: Phosphopantetheine adenylyltransferase (168 aa).

Thr9 contacts substrate. ATP-binding positions include Thr9–Phe10 and His17. Residues Lys41, Leu74, and Arg88 each contribute to the substrate site. ATP is bound by residues Gly89 to Arg91, Glu99, and Leu124 to Arg130.

It belongs to the bacterial CoaD family. In terms of assembly, homohexamer. Mg(2+) serves as cofactor.

The protein localises to the cytoplasm. The catalysed reaction is (R)-4'-phosphopantetheine + ATP + H(+) = 3'-dephospho-CoA + diphosphate. The protein operates within cofactor biosynthesis; coenzyme A biosynthesis; CoA from (R)-pantothenate: step 4/5. In terms of biological role, reversibly transfers an adenylyl group from ATP to 4'-phosphopantetheine, yielding dephospho-CoA (dPCoA) and pyrophosphate. The protein is Phosphopantetheine adenylyltransferase of Sphingopyxis alaskensis (strain DSM 13593 / LMG 18877 / RB2256) (Sphingomonas alaskensis).